The primary structure comprises 315 residues: Malate dehydrogenase (315 aa).

NAD(+) contacts are provided by residues 10 to 15 and Asp-34; that span reads GAGNVG. Residues Arg-85 and Arg-91 each coordinate substrate. Residues Asn-98 and 121–123 contribute to the NAD(+) site; that span reads VSN. Substrate is bound by residues Asn-123 and Arg-154. His-178 functions as the Proton acceptor in the catalytic mechanism.

It belongs to the LDH/MDH superfamily. MDH type 3 family.

It carries out the reaction (S)-malate + NAD(+) = oxaloacetate + NADH + H(+). Functionally, catalyzes the reversible oxidation of malate to oxaloacetate. This Rhodopirellula baltica (strain DSM 10527 / NCIMB 13988 / SH1) protein is Malate dehydrogenase.